Consider the following 150-residue polypeptide: Large ribosomal subunit protein bL17 (150 aa).

A disordered region spans residues Asp-126–Glu-150.

It belongs to the bacterial ribosomal protein bL17 family. As to quaternary structure, part of the 50S ribosomal subunit. Contacts protein L32.

This is Large ribosomal subunit protein bL17 from Solibacter usitatus (strain Ellin6076).